The sequence spans 168 residues: tRNA (cytidine(56)-2'-O)-methyltransferase (168 aa).

S-adenosyl-L-methionine-binding positions include L79 and 104–108 (GAEKV).

This sequence belongs to the aTrm56 family. Homodimer.

The protein resides in the cytoplasm. It carries out the reaction cytidine(56) in tRNA + S-adenosyl-L-methionine = 2'-O-methylcytidine(56) in tRNA + S-adenosyl-L-homocysteine + H(+). In terms of biological role, specifically catalyzes the AdoMet-dependent 2'-O-ribose methylation of cytidine at position 56 in tRNAs. The sequence is that of tRNA (cytidine(56)-2'-O)-methyltransferase from Archaeoglobus fulgidus (strain ATCC 49558 / DSM 4304 / JCM 9628 / NBRC 100126 / VC-16).